The primary structure comprises 801 residues: Phenylalanine--tRNA ligase beta subunit (801 aa).

The tRNA-binding domain occupies 39-153; it reads ADGLSKLVVG…EEAVPGDAIF (115 aa). The region spanning 406-481 is the B5 domain; it reads TEPVEVSTSL…RIYGYDKLPT (76 aa). Residues D459, D465, E468, and E469 each coordinate Mg(2+). The 94-residue stretch at 708–801 folds into the FDX-ACB domain; that stretch reads TKFPAMTRDV…LTEQVGAEVR (94 aa).

Belongs to the phenylalanyl-tRNA synthetase beta subunit family. Type 1 subfamily. As to quaternary structure, tetramer of two alpha and two beta subunits. Requires Mg(2+) as cofactor.

The protein localises to the cytoplasm. The catalysed reaction is tRNA(Phe) + L-phenylalanine + ATP = L-phenylalanyl-tRNA(Phe) + AMP + diphosphate + H(+). The chain is Phenylalanine--tRNA ligase beta subunit from Streptococcus pyogenes serotype M1.